The primary structure comprises 203 residues: Small ribosomal subunit protein uS7A (203 aa).

The protein belongs to the universal ribosomal protein uS7 family. Component of the small ribosomal subunit (SSU). Mature yeast ribosomes consist of a small (40S) and a large (60S) subunit. The 40S small subunit contains 1 molecule of ribosomal RNA (18S rRNA) and at least 33 different proteins. The large 60S subunit contains 3 rRNA molecules (25S, 5.8S and 5S rRNA) and at least 46 different proteins.

The protein localises to the cytoplasm. It localises to the nucleus. It is found in the nucleolus. Component of the ribosome, a large ribonucleoprotein complex responsible for the synthesis of proteins in the cell. The small ribosomal subunit (SSU) binds messenger RNAs (mRNAs) and translates the encoded message by selecting cognate aminoacyl-transfer RNA (tRNA) molecules. The large subunit (LSU) contains the ribosomal catalytic site termed the peptidyl transferase center (PTC), which catalyzes the formation of peptide bonds, thereby polymerizing the amino acids delivered by tRNAs into a polypeptide chain. The nascent polypeptides leave the ribosome through a tunnel in the LSU and interact with protein factors that function in enzymatic processing, targeting, and the membrane insertion of nascent chains at the exit of the ribosomal tunnel. The protein is Small ribosomal subunit protein uS7A (rps5) of Schizosaccharomyces pombe (strain 972 / ATCC 24843) (Fission yeast).